We begin with the raw amino-acid sequence, 372 residues long: N-methyl-L-tryptophan oxidase (372 aa).

Residue 4 to 34 (DLIIIGSGSVGAAAGYYATRAGLNVLMTDAH) coordinates FAD. Cysteine 308 bears the S-8alpha-FAD cysteine mark.

The protein belongs to the MSOX/MTOX family. MTOX subfamily. As to quaternary structure, monomer. FAD serves as cofactor.

The catalysed reaction is N(alpha)-methyl-L-tryptophan + O2 + H2O = L-tryptophan + formaldehyde + H2O2. In terms of biological role, catalyzes the oxidative demethylation of N-methyl-L-tryptophan. The protein is N-methyl-L-tryptophan oxidase of Escherichia coli O139:H28 (strain E24377A / ETEC).